Consider the following 244-residue polypeptide: Large ribosomal subunit protein uL30A (244 aa).

The interval 1–26 is disordered; sequence MAAEKILTPESQLKKSKAQQKTAEQV.

It belongs to the universal ribosomal protein uL30 family. As to quaternary structure, component of the large ribosomal subunit (LSU). Mature yeast ribosomes consist of a small (40S) and a large (60S) subunit. The 40S small subunit contains 1 molecule of ribosomal RNA (18S rRNA) and 33 different proteins (encoded by 57 genes). The large 60S subunit contains 3 rRNA molecules (25S, 5.8S and 5S rRNA) and 46 different proteins (encoded by 81 genes).

The protein localises to the cytoplasm. In terms of biological role, component of the ribosome, a large ribonucleoprotein complex responsible for the synthesis of proteins in the cell. The small ribosomal subunit (SSU) binds messenger RNAs (mRNAs) and translates the encoded message by selecting cognate aminoacyl-transfer RNA (tRNA) molecules. The large subunit (LSU) contains the ribosomal catalytic site termed the peptidyl transferase center (PTC), which catalyzes the formation of peptide bonds, thereby polymerizing the amino acids delivered by tRNAs into a polypeptide chain. The nascent polypeptides leave the ribosome through a tunnel in the LSU and interact with protein factors that function in enzymatic processing, targeting, and the membrane insertion of nascent chains at the exit of the ribosomal tunnel. The protein is Large ribosomal subunit protein uL30A of Saccharomyces cerevisiae (strain ATCC 204508 / S288c) (Baker's yeast).